A 190-amino-acid chain; its full sequence is Segregation and condensation protein B (190 aa).

This sequence belongs to the ScpB family. In terms of assembly, homodimer. Homodimerization may be required to stabilize the binding of ScpA to the Smc head domains. Component of a cohesin-like complex composed of ScpA, ScpB and the Smc homodimer, in which ScpA and ScpB bind to the head domain of Smc. The presence of the three proteins is required for the association of the complex with DNA.

It localises to the cytoplasm. Participates in chromosomal partition during cell division. May act via the formation of a condensin-like complex containing Smc and ScpA that pull DNA away from mid-cell into both cell halves. In Bacillus cereus (strain ATCC 14579 / DSM 31 / CCUG 7414 / JCM 2152 / NBRC 15305 / NCIMB 9373 / NCTC 2599 / NRRL B-3711), this protein is Segregation and condensation protein B.